The primary structure comprises 330 residues: Inactive hydroxysteroid dehydrogenase-like protein 1 (330 aa).

An N-acetylalanine modification is found at Ala2. The tract at residues 2–82 (AAVDSFYLLY…SGATDGIGKA (81 aa)) is required for mitochondria translocation. Residues 74–80 (GATDGIG), Asp125, and Lys222 contribute to the NADP(+) site.

Belongs to the short-chain dehydrogenases/reductases (SDR) family. 17-beta-HSD 3 subfamily. In terms of assembly, interacts with STYXL1. Highly expressed in testis and ovary. Also detected in thyroid, spinal cord, adrenal gland, heart, placenta, skeletal muscle, small intestine, colon, spleen, prostate and pancreas.

The protein resides in the mitochondrion. This Homo sapiens (Human) protein is Inactive hydroxysteroid dehydrogenase-like protein 1 (HSDL1).